The chain runs to 154 residues: MYYYLITLAVIALDQLTKWIVVQNMEIGQKIEVIPGFLYWTSYRNDGAAWSILEGHMWFFYLITVIVIGIIIYIMQKYAKGKRLFSISLAFILGGAIGNFIDRILHQEVVDFVQTVWGNYYFPIFNVADAALSVGVVLMLVYVFVDDRKTKGIK.

The next 2 membrane-spanning stretches (helical) occupy residues G55 to M75 and L84 to I104. Residues D111 and D129 contribute to the active site. A helical transmembrane segment spans residues I124–F144.

Belongs to the peptidase A8 family.

Its subcellular location is the cell membrane. It carries out the reaction Release of signal peptides from bacterial membrane prolipoproteins. Hydrolyzes -Xaa-Yaa-Zaa-|-(S,diacylglyceryl)Cys-, in which Xaa is hydrophobic (preferably Leu), and Yaa (Ala or Ser) and Zaa (Gly or Ala) have small, neutral side chains.. The protein operates within protein modification; lipoprotein biosynthesis (signal peptide cleavage). Functionally, this protein specifically catalyzes the removal of signal peptides from prolipoproteins. In Listeria innocua serovar 6a (strain ATCC BAA-680 / CLIP 11262), this protein is Lipoprotein signal peptidase.